A 123-amino-acid chain; its full sequence is MRAQRGLILLLLLLAVFCSTAVSLTCYHCFQPVVSSCNMNSTCSPDQDSCLYAVAGMQVYQRCWKQSDCHGEIIMDQLEETKLKFRCCQFNLCNKSDGSLGKTPLLGTSVLVAILNLCFLSHL.

The signal sequence occupies residues 1 to 23 (MRAQRGLILLLLLLAVFCSTAVS). One can recognise a UPAR/Ly6 domain in the interval 24-96 (LTCYHCFQPV…CCQFNLCNKS (73 aa)). Cystine bridges form between Cys-26–Cys-50, Cys-29–Cys-37, Cys-43–Cys-63, Cys-69–Cys-87, and Cys-88–Cys-93. Residue Asn-40 is glycosylated (N-linked (GlcNAc...) asparagine). The N-linked (GlcNAc...) asparagine glycan is linked to Asn-94. Positions 97–123 (DGSLGKTPLLGTSVLVAILNLCFLSHL) are cleaved as a propeptide — removed in mature form.

Interacts with T-cell surface antigen CD2. N- and O-glycosylated. Expressed in all tissues examined (liver, kidney, spleen, thymus, brain and heart). Low levels in thymus. Also expressed in mononuclear cells, erythrocytes and platelets. Barely detected in neutrophils.

Its subcellular location is the cell membrane. It localises to the secreted. In terms of biological role, potent inhibitor of the complement membrane attack complex (MAC) action, which protects self-cells from damage during complement activation. Acts by binding to the beta-haipins of C8 (C8A and C8B) components of the assembling MAC, forming an intermolecular beta-sheet that prevents incorporation of the multiple copies of C9 required for complete formation of the osmolytic pore. The sequence is that of CD59A glycoprotein from Mus musculus (Mouse).